A 596-amino-acid chain; its full sequence is Adenine deaminase (596 aa).

This sequence belongs to the metallo-dependent hydrolases superfamily. Adenine deaminase family. Mn(2+) is required as a cofactor.

It carries out the reaction adenine + H2O + H(+) = hypoxanthine + NH4(+). This is Adenine deaminase from Moorella thermoacetica (strain ATCC 39073 / JCM 9320).